The primary structure comprises 106 residues: Nucleoid-associated protein Rpal_0620 (106 aa).

The protein belongs to the YbaB/EbfC family. Homodimer.

It is found in the cytoplasm. It localises to the nucleoid. In terms of biological role, binds to DNA and alters its conformation. May be involved in regulation of gene expression, nucleoid organization and DNA protection. The polypeptide is Nucleoid-associated protein Rpal_0620 (Rhodopseudomonas palustris (strain TIE-1)).